A 309-amino-acid polypeptide reads, in one-letter code: MGYKHKDLLGTRELSKEEILYFLDAAKEFKELNLKDIKKCEYLRGKTTINAFYENSTRTRTSFEIAAKRLGADTINFTASNSSVKKGETLNDTMNNMAAMKTDIIVLRHPSSGAAKFAAARTDASVVNAGDGTNEHPSQALLDLFTLLEYGKSLDKNTTVSIIGDIARSRVARSDIWAMKKFGINVKLFAPKMMIPKDAEVFESEICKNMEEACEGSDVIIMLRIQLERADGDVAFPSSREYSKFFGLNKNRIKLAKPDAIVLHPGPINRGVELNSDVADGTHSVILNQVENGVAVRMAILNTLINNRG.

Carbamoyl phosphate is bound by residues R58 and T59. K86 is an L-aspartate binding site. R108, H136, and Q139 together coordinate carbamoyl phosphate. The L-aspartate site is built by R170 and R224. The carbamoyl phosphate site is built by G266 and P267.

Belongs to the aspartate/ornithine carbamoyltransferase superfamily. ATCase family. In terms of assembly, heterododecamer (2C3:3R2) of six catalytic PyrB chains organized as two trimers (C3), and six regulatory PyrI chains organized as three dimers (R2).

The catalysed reaction is carbamoyl phosphate + L-aspartate = N-carbamoyl-L-aspartate + phosphate + H(+). It functions in the pathway pyrimidine metabolism; UMP biosynthesis via de novo pathway; (S)-dihydroorotate from bicarbonate: step 2/3. In terms of biological role, catalyzes the condensation of carbamoyl phosphate and aspartate to form carbamoyl aspartate and inorganic phosphate, the committed step in the de novo pyrimidine nucleotide biosynthesis pathway. In Campylobacter curvus (strain 525.92), this protein is Aspartate carbamoyltransferase catalytic subunit.